The primary structure comprises 183 residues: Adenine phosphoribosyltransferase (183 aa).

The protein belongs to the purine/pyrimidine phosphoribosyltransferase family. As to quaternary structure, homodimer.

The protein resides in the cytoplasm. The catalysed reaction is AMP + diphosphate = 5-phospho-alpha-D-ribose 1-diphosphate + adenine. The protein operates within purine metabolism; AMP biosynthesis via salvage pathway; AMP from adenine: step 1/1. Its function is as follows. Catalyzes a salvage reaction resulting in the formation of AMP, that is energically less costly than de novo synthesis. The sequence is that of Adenine phosphoribosyltransferase from Salmonella typhi.